We begin with the raw amino-acid sequence, 425 residues long: MALTGYSWLLLSATFLNVGAEISITLEPAQPSEGDNVTLVVHGLSGELLAYSWYAGPTLSVSYLVASYIVSTGDETPGPAHTGREAVRPDGSLDIQGILPRHSGTYILQTFNRQLQTEVGYGHVQVHEILAQPTVLANSTALVERRDTLRLMCSSPSPTAEVRWFFNGGALPVALRLGLSPDGRVLARHGIRREEAGAYQCEVWNPVSVSRSEPINLTVYFGPERVAILQDSTTRTGCTIKVDFNTSLTLWCVSRSCPEPEYVWTFNGQALKNGQDHLNISSMTAAQEGTYTCIAKNTKTLLSGSASVVVKLSAAAVATMIVPVPTKPTEGQDVTLTVQGYPKDLLVYAWYRGPASEPNRLLSQLPSGTWIAGPAHTGREVGFPNCSLLVQKLNLTDTGRYTLKTVTVQGKTETLEVELQVAPLG.

Positions 1–20 (MALTGYSWLLLSATFLNVGA) are cleaved as a signal peptide. Asn36 is a glycosylation site (N-linked (GlcNAc...) asparagine). 2 consecutive Ig-like C2-type domains span residues 133–218 (PTVL…INLT) and 223–309 (PERV…ASVV). An intrachain disulfide couples Cys153 to Cys201. Asn216 is a glycosylation site (N-linked (GlcNAc...) asparagine). Cysteines 252 and 293 form a disulfide. The N-linked (GlcNAc...) asparagine glycan is linked to Asn394.

This sequence belongs to the immunoglobulin superfamily. CEA family. Homooligomer; can for homodimers and homotetramers. Interacts with TECTA and TECTB.

It is found in the secreted. In terms of biological role, required for proper hearing, plays a role in maintaining the integrity of the tectorial membrane. The protein is Cell adhesion molecule CEACAM16 of Homo sapiens (Human).